Consider the following 111-residue polypeptide: Mitochondrial import inner membrane translocase subunit Tim10B (111 aa).

The short motif at 24 to 48 is the Twin CX3C motif element; it reads CFNACARDYTTSTLTKDEGSCVSQC. 2 disulfide bridges follow: Cys-24–Cys-48 and Cys-28–Cys-44. The segment at 73 to 111 is disordered; that stretch reads KQGEQSPTEAIKSAKPEPAVPAPEATPVETTPVIEENKQ. Residues 94-105 show a composition bias toward low complexity; that stretch reads APEATPVETTPV.

It belongs to the small Tim family. As to quaternary structure, component of the TIM22 complex, whose core is composed of tim-22, associated with peripheral protein tin-9.2/tim-10b and the 70 kDa heterohexamer. In most cases, the 70 kDa complex is composed of TIMM9 and TIMM10.

It is found in the mitochondrion inner membrane. Its function is as follows. Component of the TIM22 complex, a complex that mediates the import and insertion of multi-pass transmembrane proteins into the mitochondrial inner membrane. The TIM22 complex forms a twin-pore translocase that uses the membrane potential as the external driving force. In the TIM22 complex, it may act as a docking point for the soluble 70 kDa complex that guides the target proteins in transit through the aqueous mitochondrial intermembrane space. This chain is Mitochondrial import inner membrane translocase subunit Tim10B (tin-9.2), found in Caenorhabditis elegans.